Here is a 209-residue protein sequence, read N- to C-terminus: uncharacterized protein (209 aa).

Positions 41 to 76 (NVENLCLIRNKLKTDIENLLENKIDVENKLLVLRNQ) form a coiled coil.

This is an uncharacterized protein from Acanthamoeba polyphaga (Amoeba).